A 717-amino-acid chain; its full sequence is Patatin-like phospholipase domain-containing protein AO090003000839 (717 aa).

The chain crosses the membrane as a helical span at residues 87–107 (WPFLFIVFGWITVLGFAYALT). A PNPLA domain is found at 277-468 (LCLSGGATFA…RTDIPIRALN (192 aa)). A GXSXG motif is present at residues 308-312 (GTSGG). The active-site Nucleophile is Ser310. The active-site Proton acceptor is Asp455. The interval 620-696 (VSPAQSRRKR…STGNIFQEMR (77 aa)) is disordered. A compositionally biased stretch (basic and acidic residues) spans 639-658 (MVERLDHNLPDRQPDNKEDL). A compositionally biased stretch (low complexity) spans 660–673 (DSSGIDSNVSSRDS).

The protein belongs to the PLPL family.

It is found in the membrane. Probable lipid hydrolase. The polypeptide is Patatin-like phospholipase domain-containing protein AO090003000839 (Aspergillus oryzae (strain ATCC 42149 / RIB 40) (Yellow koji mold)).